Consider the following 348-residue polypeptide: Selenide, water dikinase (348 aa).

Residue C17 is part of the active site. Residues K20 and 48-50 (TRD) contribute to the ATP site. Residue D51 coordinates Mg(2+). ATP contacts are provided by residues D68, D91, and 139 to 141 (GHS). Mg(2+) is bound at residue D91. Residue D227 participates in Mg(2+) binding.

It belongs to the selenophosphate synthase 1 family. Class I subfamily. As to quaternary structure, homodimer. Requires Mg(2+) as cofactor.

The catalysed reaction is hydrogenselenide + ATP + H2O = selenophosphate + AMP + phosphate + 2 H(+). Synthesizes selenophosphate from selenide and ATP. In Yersinia pestis, this protein is Selenide, water dikinase.